The sequence spans 111 residues: UPF0122 protein YofM (111 aa).

Belongs to the UPF0122 family.

Might take part in the signal recognition particle (SRP) pathway. This is inferred from the conservation of its genetic proximity to ftsY/ffh. May be a regulatory protein. In Lactococcus lactis subsp. lactis (strain IL1403) (Streptococcus lactis), this protein is UPF0122 protein YofM (yofM).